The primary structure comprises 629 residues: tRNA uridine 5-carboxymethylaminomethyl modification enzyme MnmG (629 aa).

Gly-13–Gly-18 provides a ligand contact to FAD. Residue Gly-273–Phe-287 coordinates NAD(+).

Belongs to the MnmG family. As to quaternary structure, homodimer. Heterotetramer of two MnmE and two MnmG subunits. FAD is required as a cofactor.

It localises to the cytoplasm. Its function is as follows. NAD-binding protein involved in the addition of a carboxymethylaminomethyl (cmnm) group at the wobble position (U34) of certain tRNAs, forming tRNA-cmnm(5)s(2)U34. The protein is tRNA uridine 5-carboxymethylaminomethyl modification enzyme MnmG of Marinomonas sp. (strain MWYL1).